Reading from the N-terminus, the 79-residue chain is Small ribosomal subunit protein bS18 (79 aa).

It belongs to the bacterial ribosomal protein bS18 family. In terms of assembly, part of the 30S ribosomal subunit. Forms a tight heterodimer with protein bS6.

Its function is as follows. Binds as a heterodimer with protein bS6 to the central domain of the 16S rRNA, where it helps stabilize the platform of the 30S subunit. This chain is Small ribosomal subunit protein bS18, found in Rhodopseudomonas palustris (strain HaA2).